Reading from the N-terminus, the 586-residue chain is Ezrin (586 aa).

The FERM domain occupies 2-295 (PKPINVRVTT…GNHELYMRRR (294 aa)). K60 is modified (N6-acetyllysine). Residues 115 to 120 (IYCPPE) carry the [IL]-x-C-x-x-[DE] motif motif. Y146 bears the Phosphotyrosine; by PDGFR mark. Residues 244-586 (EIRNISFNDK…KQRIDEFEAM (343 aa)) form an interaction with SCYL3 region. Positions 302–462 (VQQMKAQARE…QDDLVKTKEE (161 aa)) form a coiled coil. Residues 306 to 338 (KAQAREEKHQKQLERQQLETEKKRRETVEREKE) form a disordered region. The span at 308–338 (QAREEKHQKQLERQQLETEKKRRETVEREKE) shows a compositional bias: basic and acidic residues. Y354 carries the phosphotyrosine; by PDGFR modification. S366 carries the phosphoserine modification. Y478 carries the post-translational modification Phosphotyrosine. A disordered region spans residues 534–565 (LSNELSQARDENKRTHNDIIHNENMRQGRDKY). Phosphoserine is present on S535. Positions 540-565 (QARDENKRTHNDIIHNENMRQGRDKY) are enriched in basic and acidic residues. At T567 the chain carries Phosphothreonine; by ROCK2 and PKC/PRKCI.

Interacts with PALS1 and NHERF2. Found in a complex with EZR, PODXL and NHERF2. Interacts with MCC, PLEKHG6, PODXL, SCYL3/PACE1, NHERF1 and TMEM8B. Interacts (when phosphorylated) with FES/FPS. Interacts with dimeric S100P, the interaction may be activating through unmasking of F-actin binding sites. Identified in complexes that contain VIM, EZR, AHNAK, BFSP1, BFSP2, ANK2, PLEC, PRX and spectrin. Detected in a complex composed of at least EZR, AHNAK, PPL and PRX. Interacts with PDPN (via cytoplasmic domain); activates RHOA and promotes epithelial-mesenchymal transition. Interacts with SPN/CD43 cytoplasmic tail. Interacts with CD44 and ICAM2. Interacts with SLC9A3; interaction targets SLC9A3 to the apical membrane. Interacts with SLC9A1; regulates interactions of SLC9A1 with cytoskeletal and promotes stress fiber formation. Interacts with CLIC5; may work together in a complex which also includes RDX and MYO6 to stabilize linkages between the plasma membrane and subjacent actin cytoskeleton at the base of stereocilia. Phosphorylated by tyrosine-protein kinases. Phosphorylation by ROCK2 suppresses the head-to-tail association of the N-terminal and C-terminal halves resulting in an opened conformation which is capable of actin and membrane-binding. Post-translationally, S-nitrosylation is induced by interferon-gamma and oxidatively-modified low-densitity lipoprotein (LDL(ox)) possibly implicating the iNOS-S100A8/9 transnitrosylase complex. Detected in eye lens fiber cells. Expressed in cerebrum and cerebellum (at protein level). Component of the microvilli of intestinal epithelial cells.

Its subcellular location is the apical cell membrane. It is found in the cell projection. It localises to the microvillus membrane. The protein resides in the ruffle membrane. The protein localises to the cytoplasm. Its subcellular location is the cell cortex. It is found in the cytoskeleton. It localises to the microvillus. A head-to-tail association, of the N-terminal and C-terminal halves results in a closed conformation (inactive form) which is incapable of actin or membrane-binding. Probably involved in connections of major cytoskeletal structures to the plasma membrane. In epithelial cells, required for the formation of microvilli and membrane ruffles on the apical pole. Along with PLEKHG6, required for normal macropinocytosis. This Mus musculus (Mouse) protein is Ezrin (Ezr).